We begin with the raw amino-acid sequence, 95 residues long: MSHYDILQAPVISEKAYSAMERGVYSFWVSPKATKTEIKDAIQQAFGVRVIGISTMNVPGKRKRVGRFIGQRNDRKKAIVRLAEGQSIEALAGQA.

This sequence belongs to the universal ribosomal protein uL23 family. As to quaternary structure, part of the 50S ribosomal subunit. Contacts protein L29 and trigger factor when it is bound to the ribosome.

Its function is as follows. One of the early assembly protein it binds 23S rRNA. One of the proteins that surrounds the polypeptide exit tunnel on the outside of the subunit. Forms the main docking site for trigger factor binding to the ribosome. In Deinococcus radiodurans (strain ATCC 13939 / DSM 20539 / JCM 16871 / CCUG 27074 / LMG 4051 / NBRC 15346 / NCIMB 9279 / VKM B-1422 / R1), this protein is Large ribosomal subunit protein uL23.